Here is a 66-residue protein sequence, read N- to C-terminus: MPKLKTRKAAAKRFRISGNGKAIRRKAFKNHLLQHKNATRRRRLSQPEVVHETDQERVKLMLPYSF.

It belongs to the bacterial ribosomal protein bL35 family.

This chain is Large ribosomal subunit protein bL35, found in Synechococcus sp. (strain ATCC 27144 / PCC 6301 / SAUG 1402/1) (Anacystis nidulans).